The chain runs to 369 residues: Anhydro-N-acetylmuramic acid kinase (369 aa).

12–19 (GTSLDGVD) is an ATP binding site.

This sequence belongs to the anhydro-N-acetylmuramic acid kinase family.

It carries out the reaction 1,6-anhydro-N-acetyl-beta-muramate + ATP + H2O = N-acetyl-D-muramate 6-phosphate + ADP + H(+). It participates in amino-sugar metabolism; 1,6-anhydro-N-acetylmuramate degradation. Its pathway is cell wall biogenesis; peptidoglycan recycling. Functionally, catalyzes the specific phosphorylation of 1,6-anhydro-N-acetylmuramic acid (anhMurNAc) with the simultaneous cleavage of the 1,6-anhydro ring, generating MurNAc-6-P. Is required for the utilization of anhMurNAc either imported from the medium or derived from its own cell wall murein, and thus plays a role in cell wall recycling. In Escherichia coli (strain K12 / MC4100 / BW2952), this protein is Anhydro-N-acetylmuramic acid kinase.